A 322-amino-acid polypeptide reads, in one-letter code: Tyrosine recombinase XerC (322 aa).

Residues 1–25 form a disordered region; it reads MPEAAPPVADARGSSPTATTGPGAD. Residues 16–25 show a composition bias toward low complexity; it reads PTATTGPGAD. The Core-binding (CB) domain occupies 25-111; it reads DATLSAVEPF…ACRSYYAWLL (87 aa). The Tyr recombinase domain occupies 132 to 309; that stretch reads KLPQVLDADE…DFQHLAKVYD (178 aa). Catalysis depends on residues arginine 171, lysine 195, histidine 261, arginine 264, and histidine 287. Tyrosine 296 (O-(3'-phospho-DNA)-tyrosine intermediate) is an active-site residue.

The protein belongs to the 'phage' integrase family. XerC subfamily. As to quaternary structure, forms a cyclic heterotetrameric complex composed of two molecules of XerC and two molecules of XerD.

It localises to the cytoplasm. In terms of biological role, site-specific tyrosine recombinase, which acts by catalyzing the cutting and rejoining of the recombining DNA molecules. The XerC-XerD complex is essential to convert dimers of the bacterial chromosome into monomers to permit their segregation at cell division. It also contributes to the segregational stability of plasmids. This chain is Tyrosine recombinase XerC, found in Xanthomonas campestris pv. campestris (strain 8004).